Here is a 138-residue protein sequence, read N- to C-terminus: Acidic phospholipase A2 6 (138 aa).

Residues 1–16 (MRTLWIMAVLLVGVEG) form the signal peptide. Cystine bridges form between cysteine 42–cysteine 131, cysteine 44–cysteine 60, cysteine 59–cysteine 111, cysteine 65–cysteine 138, cysteine 66–cysteine 104, cysteine 73–cysteine 97, and cysteine 91–cysteine 102. 3 residues coordinate Ca(2+): tyrosine 43, glycine 45, and glycine 47. The active site involves histidine 63. Aspartate 64 contacts Ca(2+). The active site involves aspartate 105.

This sequence belongs to the phospholipase A2 family. Group II subfamily. D49 sub-subfamily. In terms of assembly, homodimer. Ca(2+) serves as cofactor. Expressed by the venom gland.

The protein localises to the secreted. The enzyme catalyses a 1,2-diacyl-sn-glycero-3-phosphocholine + H2O = a 1-acyl-sn-glycero-3-phosphocholine + a fatty acid + H(+). Its function is as follows. Snake venom phospholipase A2 (PLA2) that has high lipolytic activity. PLA2 catalyzes the calcium-dependent hydrolysis of the 2-acyl groups in 3-sn-phosphoglycerides. In Craspedocephalus gramineus (Bamboo pit viper), this protein is Acidic phospholipase A2 6.